The primary structure comprises 1755 residues: E3 ubiquitin-protein ligase UBR2 (1755 aa).

At Ala-2 the chain carries N-acetylalanine. Residue Lys-94 forms a Glycyl lysine isopeptide (Lys-Gly) (interchain with G-Cter in ubiquitin) linkage. A UBR-type zinc finger spans residues 97 to 168 (HLCGRVFKVG…EGPYCQKHKL (72 aa)). Residues Cys-99, Cys-112, Cys-115, Cys-124, Cys-127, His-133, and His-136 each contribute to the Zn(2+) site. Phe-148 serves as a coordination point for a peptide. Cys-149 serves as a coordination point for Zn(2+). Asp-150 provides a ligand contact to a peptide. Cys-151 serves as a coordination point for Zn(2+). A peptide is bound at residue Asp-153. A Glycyl lysine isopeptide (Lys-Gly) (interchain with G-Cter in ubiquitin) cross-link involves residue Lys-158. Position 163 (Cys-163) interacts with Zn(2+). Residue Lys-165 forms a Glycyl lysine isopeptide (Lys-Gly) (interchain with G-Cter in ubiquitin) linkage. His-166 provides a ligand contact to Zn(2+). Residues Lys-248, Lys-255, and Lys-470 each participate in a glycyl lysine isopeptide (Lys-Gly) (interchain with G-Cter in ubiquitin) cross-link. Ser-476 bears the Phosphoserine mark. Residues Lys-488, Lys-568, Lys-779, and Lys-789 each participate in a glycyl lysine isopeptide (Lys-Gly) (interchain with G-Cter in ubiquitin) cross-link. Residues 1012-1033 (AEAEGTIMEESSRDKDKAERKR) form a disordered region. Residues 1019 to 1054 (MEESSRDKDKAERKRKAEIARLRREKIMAQMSEMQR) are a coiled coil. Over residues 1021 to 1033 (ESSRDKDKAERKR) the composition is skewed to basic and acidic residues. Zn(2+)-binding residues include Cys-1108, Cys-1111, Cys-1168, His-1170, His-1173, Cys-1176, Cys-1210, and Cys-1213. An RING-type; atypical zinc finger spans residues 1108–1214 (CILCQEEQEV…NGEFLCPLCE (107 aa)). Residues Lys-1496, Lys-1599, and Lys-1689 each participate in a glycyl lysine isopeptide (Lys-Gly) (interchain with G-Cter in ubiquitin) cross-link. Phosphoserine is present on Ser-1694. A Phosphotyrosine modification is found at Tyr-1697.

The protein belongs to the E3 ubiquitin-protein ligase UBR1-like family. Interacts with UBE2B; promotes the UBE2B-H2A interaction and the ubiquitination of histone H2A by UBE2B and UBR2. Interacts with RECQL4. Interacts with Tex19.1 and Tex19.2; does not lead to Tex19.1 degradation and stabilizes it. Interacts with L1RE1. Interacts with CASP8. Interacts with ATXN3. Interacts with UBE2O. In terms of processing, dephosphorylated by DUSP22 at Ser-1694 and Tyr-1697, leading to subsequent ubiquitination and proteasomal degradation. 'Lys-48'-linked ubiquitinated at Lys-94, Lys-779 and Lys-1599 following DUSP22-mediated dephosphorylation of Ser-1694 and Tyr-1697 which promotes UBR2 interaction with the SCF(FBW1A) E3 ubiquitin-protein ligase complex. Highly expressed in skeletal muscle. Also expressed in heart, kidney and testis. Expressed in acinar cells of the pancreas. In testes, expressed primarily in spermatocytes. Expressed in cerebellum.

Its subcellular location is the nucleus. The protein localises to the chromosome. The catalysed reaction is S-ubiquitinyl-[E2 ubiquitin-conjugating enzyme]-L-cysteine + [acceptor protein]-L-lysine = [E2 ubiquitin-conjugating enzyme]-L-cysteine + N(6)-ubiquitinyl-[acceptor protein]-L-lysine.. The protein operates within protein modification; protein ubiquitination. Its function is as follows. E3 ubiquitin-protein ligase which is a component of the N-end rule pathway. Recognizes and binds to proteins bearing specific N-terminal residues (N-degrons) that are destabilizing according to the N-end rule, leading to their ubiquitination and subsequent degradation. Recognizes both type-1 and type-2 N-degrons, containing positively charged amino acids (Arg, Lys and His) and bulky and hydrophobic amino acids, respectively. Does not ubiquitinate proteins that are acetylated at the N-terminus. In contrast, it strongly binds methylated N-degrons. Plays a critical role in chromatin inactivation and chromosome-wide transcriptional silencing during meiosis via ubiquitination of histone H2A. Binds leucine and is a negative regulator of the leucine-mTOR signaling pathway, thereby controlling cell growth. Required for spermatogenesis, promotes, with Tex19.1, SPO11-dependent recombination foci to accumulate and drive robust homologous chromosome synapsis. Polyubiquitinates LINE-1 retrotransposon encoded, LIRE1, which induces degradation, inhibiting LINE-1 retrotransposon mobilization. Catalyzes ubiquitination and degradation of the N-terminal part of NLRP1B following NLRP1B activation by pathogens and other damage-associated signals: ubiquitination promotes degradation of the N-terminal part and subsequent release of the cleaved C-terminal part of NLRP1B, which polymerizes and forms the NLRP1B inflammasome followed by host cell pyroptosis. Plays a role in T-cell receptor signaling by inducing 'Lys-63'-linked ubiquitination of lymphocyte cell-specific kinase LCK. This activity is regulated by DUSP22, which induces 'Lys-48'-linked ubiquitination of UBR2, leading to its proteasomal degradation by SCF E3 ubiquitin-protein ligase complex. This Mus musculus (Mouse) protein is E3 ubiquitin-protein ligase UBR2.